Reading from the N-terminus, the 109-residue chain is Large ribosomal subunit protein uL24 (109 aa).

The protein belongs to the universal ribosomal protein uL24 family. As to quaternary structure, part of the 50S ribosomal subunit.

Its function is as follows. One of two assembly initiator proteins, it binds directly to the 5'-end of the 23S rRNA, where it nucleates assembly of the 50S subunit. Functionally, one of the proteins that surrounds the polypeptide exit tunnel on the outside of the subunit. This Rickettsia canadensis (strain McKiel) protein is Large ribosomal subunit protein uL24.